Consider the following 336-residue polypeptide: Ketol-acid reductoisomerase (NADP(+)) (336 aa).

In terms of domain architecture, KARI N-terminal Rossmann spans 1–182; the sequence is MAVIYYDKDA…GVTRAGVIET (182 aa). NADP(+) is bound by residues 25-28, arginine 48, serine 51, serine 53, and 83-86; these read YGSQ and DENQ. Histidine 108 is an active-site residue. Glycine 134 contacts NADP(+). A KARI C-terminal knotted domain is found at 183 to 328; that stretch reads TFKEETETDL…KELRKMMPWL (146 aa). The Mg(2+) site is built by aspartate 191, glutamate 195, glutamate 227, and glutamate 231. Serine 252 is a substrate binding site.

The protein belongs to the ketol-acid reductoisomerase family. The cofactor is Mg(2+).

It catalyses the reaction (2R)-2,3-dihydroxy-3-methylbutanoate + NADP(+) = (2S)-2-acetolactate + NADPH + H(+). The enzyme catalyses (2R,3R)-2,3-dihydroxy-3-methylpentanoate + NADP(+) = (S)-2-ethyl-2-hydroxy-3-oxobutanoate + NADPH + H(+). It functions in the pathway amino-acid biosynthesis; L-isoleucine biosynthesis; L-isoleucine from 2-oxobutanoate: step 2/4. It participates in amino-acid biosynthesis; L-valine biosynthesis; L-valine from pyruvate: step 2/4. In terms of biological role, involved in the biosynthesis of branched-chain amino acids (BCAA). Catalyzes an alkyl-migration followed by a ketol-acid reduction of (S)-2-acetolactate (S2AL) to yield (R)-2,3-dihydroxy-isovalerate. In the isomerase reaction, S2AL is rearranged via a Mg-dependent methyl migration to produce 3-hydroxy-3-methyl-2-ketobutyrate (HMKB). In the reductase reaction, this 2-ketoacid undergoes a metal-dependent reduction by NADPH to yield (R)-2,3-dihydroxy-isovalerate. This is Ketol-acid reductoisomerase (NADP(+)) from Thermotoga petrophila (strain ATCC BAA-488 / DSM 13995 / JCM 10881 / RKU-1).